We begin with the raw amino-acid sequence, 1014 residues long: 2-oxoglutarate dehydrogenase, mitochondrial (1014 aa).

The transit peptide at 1-30 directs the protein to the mitochondrion; sequence MLRFVSSQTCRYSSRGLLKTSLLKNASTVK. Thiamine diphosphate contacts are provided by Arg306, Asp406, Asn439, and Ile441. Residues Asp406, Asn439, and Ile441 each contribute to the Mg(2+) site.

The protein belongs to the alpha-ketoglutarate dehydrogenase family. Component of the 2-oxoglutarate dehydrogenase complex (OGDC), also called alpha-ketoglutarate dehydrogenase (KGDH) complex. The copmplex is composed of the catalytic subunits OGDH (2-oxoglutarate dehydrogenase KGD1; also called E1 subunit), DLST (dihydrolipoamide succinyltransferase KGD2; also called E2 subunit) and DLD (dihydrolipoamide dehydrogenase LPD1; also called E3 subunit), and the assembly factor KGD4. Thiamine diphosphate is required as a cofactor. Mg(2+) serves as cofactor.

It localises to the mitochondrion. The protein localises to the mitochondrion matrix. Its subcellular location is the mitochondrion nucleoid. The catalysed reaction is N(6)-[(R)-lipoyl]-L-lysyl-[protein] + 2-oxoglutarate + H(+) = N(6)-[(R)-S(8)-succinyldihydrolipoyl]-L-lysyl-[protein] + CO2. Catabolite repressed. Functionally, the 2-oxoglutarate dehydrogenase complex catalyzes the overall conversion of 2-oxoglutarate to succinyl-CoA and CO(2). It contains multiple copies of three enzymatic components: 2-oxoglutarate dehydrogenase (E1), dihydrolipoamide succinyltransferase (E2) and lipoamide dehydrogenase (E3). This chain is 2-oxoglutarate dehydrogenase, mitochondrial (KGD1), found in Saccharomyces cerevisiae (strain ATCC 204508 / S288c) (Baker's yeast).